A 425-amino-acid chain; its full sequence is Multifunctional CCA protein (425 aa).

Residues Gly8 and Arg11 each contribute to the ATP site. Residues Gly8 and Arg11 each contribute to the CTP site. The Mg(2+) site is built by Asp21 and Asp23. Residues Arg91, Arg141, and Arg144 each contribute to the ATP site. Positions 91, 141, and 144 each coordinate CTP. Residues 230–331 (TGVHLMMVLD…VRLLERCDAI (102 aa)) form the HD domain.

Belongs to the tRNA nucleotidyltransferase/poly(A) polymerase family. Bacterial CCA-adding enzyme type 1 subfamily. Monomer. Can also form homodimers and oligomers. It depends on Mg(2+) as a cofactor. Ni(2+) serves as cofactor.

It catalyses the reaction a tRNA precursor + 2 CTP + ATP = a tRNA with a 3' CCA end + 3 diphosphate. The enzyme catalyses a tRNA with a 3' CCA end + 2 CTP + ATP = a tRNA with a 3' CCACCA end + 3 diphosphate. Its function is as follows. Catalyzes the addition and repair of the essential 3'-terminal CCA sequence in tRNAs without using a nucleic acid template. Adds these three nucleotides in the order of C, C, and A to the tRNA nucleotide-73, using CTP and ATP as substrates and producing inorganic pyrophosphate. tRNA 3'-terminal CCA addition is required both for tRNA processing and repair. Also involved in tRNA surveillance by mediating tandem CCA addition to generate a CCACCA at the 3' terminus of unstable tRNAs. While stable tRNAs receive only 3'-terminal CCA, unstable tRNAs are marked with CCACCA and rapidly degraded. The polypeptide is Multifunctional CCA protein (Acidovorax ebreus (strain TPSY) (Diaphorobacter sp. (strain TPSY))).